The primary structure comprises 775 residues: Serine/threonine-protein kinase-like protein CCR1 (775 aa).

Residues 1-23 (METRCSLLFLSLILLYLPKPGSG) form the signal peptide. Residues 24-439 (FGSSGPIAAS…DKHWHQLQRL (416 aa)) are Extracellular-facing. 10 N-linked (GlcNAc...) asparagine glycosylation sites follow: asparagine 57, asparagine 102, asparagine 167, asparagine 213, asparagine 220, asparagine 241, asparagine 261, asparagine 292, asparagine 328, and asparagine 360. The stretch at 351–406 (PCNEKEFAFNASILNEPDLTSLCVRKELMVCSPCGSDCSHGFFLSSSCTANSDRIC) is one TNFR-Cys repeat. 3 cysteine pairs are disulfide-bonded: cysteine 352-cysteine 381, cysteine 384-cysteine 398, and cysteine 388-cysteine 406. The N-linked (GlcNAc...) asparagine glycan is linked to asparagine 414. A helical transmembrane segment spans residues 440-460 (VLIIGSCASALLIIIIGCCVV). At 461-775 (PRIVTSPNKE…EHVARDALIF (315 aa)) the chain is on the cytoplasmic side. The region spanning 520–770 (FKEFNELGRG…LANWLEHVAR (251 aa)) is the Protein kinase domain. Residues 526–534 (LGRGSYGFV) and lysine 548 contribute to the ATP site. Aspartate 645 (proton acceptor) is an active-site residue.

This sequence belongs to the protein kinase superfamily. Ser/Thr protein kinase family. In terms of assembly, homodimer. As to expression, expressed in roots, leaves, shoot apical meristems (SAM), and floral buds.

Its subcellular location is the membrane. The enzyme catalyses L-seryl-[protein] + ATP = O-phospho-L-seryl-[protein] + ADP + H(+). The catalysed reaction is L-threonyl-[protein] + ATP = O-phospho-L-threonyl-[protein] + ADP + H(+). Functionally, serine/threonine-protein kinase with low activity. The polypeptide is Serine/threonine-protein kinase-like protein CCR1 (CCR1) (Arabidopsis thaliana (Mouse-ear cress)).